Reading from the N-terminus, the 53-residue chain is ATP synthase protein 8 (53 aa).

A helical transmembrane segment spans residues 4–24 (MAPISWLLLFIVFSITFILFC).

This sequence belongs to the ATPase protein 8 family. In terms of assembly, F-type ATPases have 2 components, CF(1) - the catalytic core - and CF(0) - the membrane proton channel.

The protein resides in the mitochondrion membrane. Its function is as follows. Mitochondrial membrane ATP synthase (F(1)F(0) ATP synthase or Complex V) produces ATP from ADP in the presence of a proton gradient across the membrane which is generated by electron transport complexes of the respiratory chain. F-type ATPases consist of two structural domains, F(1) - containing the extramembraneous catalytic core and F(0) - containing the membrane proton channel, linked together by a central stalk and a peripheral stalk. During catalysis, ATP synthesis in the catalytic domain of F(1) is coupled via a rotary mechanism of the central stalk subunits to proton translocation. Part of the complex F(0) domain. Minor subunit located with subunit a in the membrane. The chain is ATP synthase protein 8 (mt:ATPase8) from Drosophila yakuba (Fruit fly).